The chain runs to 690 residues: Polyribonucleotide nucleotidyltransferase (690 aa).

Mg(2+)-binding residues include Asp-483 and Asp-489. Residues 550–609 (PKMEQITVDKKDIAAVIGKGGATIREIVEKSGAKLDVNDEGVVTVAAPDEESRNIAMQMI) form the KH domain. The S1 motif domain maps to 619-686 (NKIYSGKVMK…DRGKVKLSMK (68 aa)).

It belongs to the polyribonucleotide nucleotidyltransferase family. Mg(2+) serves as cofactor.

It is found in the cytoplasm. The enzyme catalyses RNA(n+1) + phosphate = RNA(n) + a ribonucleoside 5'-diphosphate. Functionally, involved in mRNA degradation. Catalyzes the phosphorolysis of single-stranded polyribonucleotides processively in the 3'- to 5'-direction. The sequence is that of Polyribonucleotide nucleotidyltransferase from Pelagibacter ubique (strain HTCC1062).